The sequence spans 279 residues: Bifunctional protein FolD (279 aa).

Residues 166–168 (GRS) and Ser-191 contribute to the NADP(+) site.

The protein belongs to the tetrahydrofolate dehydrogenase/cyclohydrolase family. As to quaternary structure, homodimer.

It catalyses the reaction (6R)-5,10-methylene-5,6,7,8-tetrahydrofolate + NADP(+) = (6R)-5,10-methenyltetrahydrofolate + NADPH. The enzyme catalyses (6R)-5,10-methenyltetrahydrofolate + H2O = (6R)-10-formyltetrahydrofolate + H(+). It functions in the pathway one-carbon metabolism; tetrahydrofolate interconversion. Catalyzes the oxidation of 5,10-methylenetetrahydrofolate to 5,10-methenyltetrahydrofolate and then the hydrolysis of 5,10-methenyltetrahydrofolate to 10-formyltetrahydrofolate. The protein is Bifunctional protein FolD of Shouchella clausii (strain KSM-K16) (Alkalihalobacillus clausii).